A 289-amino-acid chain; its full sequence is Diaminopimelate epimerase (289 aa).

Positions 17, 47, and 67 each coordinate substrate. C76 serves as the catalytic Proton donor. Residues 77–78 (GN), N164, N198, and 216–217 (ER) contribute to the substrate site. Catalysis depends on C225, which acts as the Proton acceptor. 226-227 (GS) contacts substrate.

It belongs to the diaminopimelate epimerase family. As to quaternary structure, homodimer.

The protein localises to the cytoplasm. It catalyses the reaction (2S,6S)-2,6-diaminopimelate = meso-2,6-diaminopimelate. The protein operates within amino-acid biosynthesis; L-lysine biosynthesis via DAP pathway; DL-2,6-diaminopimelate from LL-2,6-diaminopimelate: step 1/1. Functionally, catalyzes the stereoinversion of LL-2,6-diaminopimelate (L,L-DAP) to meso-diaminopimelate (meso-DAP), a precursor of L-lysine and an essential component of the bacterial peptidoglycan. The polypeptide is Diaminopimelate epimerase (Bradyrhizobium sp. (strain ORS 278)).